A 1380-amino-acid polypeptide reads, in one-letter code: MAMQIRPSLGGCLRHGGAGDHAARRLSRLRAAKVFVPTAVVCVLLCCAPWVMAEITNDAEREPVYILNAMYSTEAYTNEDAKALWTGMDMAFYNSHYKAAGGRPIKILHPDPDQDNLYDIAEVILHSLARQEKLLAVLGPYLDGRLTAALSNADVVQSGLMLIAPFTGSSGVRTWSDSVYFTRAEPMVELKVVLMHIVNRLRARRVAFMRLTGMHFGGEELTYVQDTLTSLLRDPAVLYTVPYSESSVEVDEEAFDAMADTNPQVIIVWAAPVQQVIYFLEKVLTDPRTSSAYVISCSMIQRVVFDVYKRLLSAGSIKPQDGRILASATTSPVSGEGLKYMEVLKAQMSNYIENSGSFDYYPDDDSTETLGRKARSEAPLSRKYTVDEFFQAHPSIAKLMALGWLSGTLVQQTLEQTDWIVNRSTYKAGLFNQNRFVIGGDYVLGDYGGPCEPLAQFLGASCYCNQGGHSSILTVLQNASWDIVPDSSFKYPQSECNSSKSQIVKAVSVLALLNQGYPKLIDAGMQLNEVLPHAFDDNLCKGYKVSSIFLRVETAKAQQLFDAEVSNYSVDIIAGPIFQALDVGEIFVLNPLYNHPQLRTEKRNYVYLMPTLEQQIYVMYSKIDALRTRTDVFEDTAVVLRGYSAQEVVEISEILFKTAGTFNLPDPSVATISFTDSLRGLLSPRAINVVIGMKDGDSAHFANFLAKYTDVMVVVCFDELTMYYEELRATFSVQPTSVQARLMSFSSLPLWTDASAEAKARWPILGHFHKIFPDPINHTPSLLRDVIIAGFIQELVSTTTVAETKLLTNAVYINGGVTTYGFTLGNFEWGCTATTSGDSCVYKNYGASNIEILSIQRMLDPTVPQLSSPSTPTMEYRPRQRSHALTPAQRNGLIAGCVVGAVVLIATCTLLLYCCMDNRNNDAAPKDGDEPVTLLFTDIESSTALWAALPQLMSDAIAAHHRVIRQLVKKYGCYEVKTIGDSFMIACRSAHSAVSLACEIQTKLLKHDWGTEALDRAYREFELARVDTLDDYEPPTARLSEEEYAALWCGLRVRVGIHTGLTDIRYDEVTKGYDYYGDTSNMAARTEAVANGGQVVATEAAWWALSNDERAGIAHTAMGPQGLRGVPFAVEMFQLNAVPGRRHAALRTEIEAILPDDTATDTASSAAGALLSSVETMSDPAAGIAFVLASCFAPYPVAQRVRELQPLLSKWGVGAPPRSRLVSEEDYCQGLMNRLAIRIATVSQARLRLTREDAADGKFKLASSEALNPLAREGDSAAGGVRPRLPGSPVTSLPAGGSSSMREWRVFTRLMNDTQHPSVTHLSQQRPSNLTSFTEAQDAAFPLNAHCGPESRVENSGADDEEIVIVRVSRNPHYARHAFE.

Over 1-34 (MAMQIRPSLGGCLRHGGAGDHAARRLSRLRAAKV) the chain is Cytoplasmic. The helical transmembrane segment at 35 to 55 (FVPTAVVCVLLCCAPWVMAEI) threads the bilayer. The Extracellular segment spans residues 56–891 (TNDAEREPVY…SHALTPAQRN (836 aa)). Residues Asn422, Asn478, Asn497, and Asn567 are each glycosylated (N-linked (GlcNAc...) asparagine). Residues 892–912 (GLIAGCVVGAVVLIATCTLLL) traverse the membrane as a helical segment. Over 913–1380 (YCCMDNRNND…NPHYARHAFE (468 aa)) the chain is Cytoplasmic. The 155-residue stretch at 933–1087 (TLLFTDIESS…DTSNMAARTE (155 aa)) folds into the Guanylate cyclase domain. Residues Asp938 and Asp981 each contribute to the Mg(2+) site. Residues 1270–1298 (LAREGDSAAGGVRPRLPGSPVTSLPAGGS) are disordered.

Belongs to the adenylyl cyclase class-3 family. It depends on Mg(2+) as a cofactor.

Its subcellular location is the membrane. The catalysed reaction is ATP = 3',5'-cyclic AMP + diphosphate. Could act as a receptor for an unknown ligand. This is Receptor-type adenylate cyclase A (RAC-A) from Leishmania donovani.